The primary structure comprises 263 residues: Chymotrypsinogen B (263 aa).

An N-terminal signal peptide occupies residues 1-18 (MAFLWLVSCFALVGATFG). Cystine bridges form between cysteine 19–cysteine 140, cysteine 60–cysteine 76, cysteine 154–cysteine 219, cysteine 186–cysteine 200, and cysteine 209–cysteine 238. In terms of domain architecture, Peptidase S1 spans 34–261 (IVNGEDAIPG…LMPWVQQILE (228 aa)). Histidine 75 serves as the catalytic Charge relay system. Serine 93 bears the Phosphoserine mark. Aspartate 120 (charge relay system) is an active-site residue. Serine 213 serves as the catalytic Charge relay system.

The protein belongs to the peptidase S1 family.

It is found in the secreted. It localises to the extracellular space. It carries out the reaction Preferential cleavage: Tyr-|-Xaa, Trp-|-Xaa, Phe-|-Xaa, Leu-|-Xaa.. In Rattus norvegicus (Rat), this protein is Chymotrypsinogen B (Ctrb1).